The sequence spans 135 residues: uncharacterized protein (135 aa).

A disordered region spans residues 1–36 (MSHAEKPMSDSVNHHHHRTFEVLTAEPVRSRRKPRH).

This sequence belongs to the transposase 8 family.

This is an uncharacterized protein from Sinorhizobium fredii (strain NBRC 101917 / NGR234).